Here is a 138-residue protein sequence, read N- to C-terminus: Large ribosomal subunit protein uL16 (138 aa).

Positions 1–13 (MLQPSRRKFRKEQ) are enriched in basic residues. The disordered stretch occupies residues 1 to 22 (MLQPSRRKFRKEQKGRNTGIAT).

This sequence belongs to the universal ribosomal protein uL16 family. Part of the 50S ribosomal subunit.

Functionally, binds 23S rRNA and is also seen to make contacts with the A and possibly P site tRNAs. The chain is Large ribosomal subunit protein uL16 from Methylibium petroleiphilum (strain ATCC BAA-1232 / LMG 22953 / PM1).